Consider the following 89-residue polypeptide: Small ribosomal subunit protein uS14 (89 aa).

The protein belongs to the universal ribosomal protein uS14 family. Part of the 30S ribosomal subunit. Contacts proteins S3 and S10.

Binds 16S rRNA, required for the assembly of 30S particles and may also be responsible for determining the conformation of the 16S rRNA at the A site. This chain is Small ribosomal subunit protein uS14, found in Chloroherpeton thalassium (strain ATCC 35110 / GB-78).